An 83-amino-acid chain; its full sequence is MKIVFAILFLTFIALTYARSFEDLKEEIKNEIEKEIFDDLEEESDELDNNVKKFNDAKPWRRWFRWKNIAPLIPVVIAASGKK.

A signal peptide spans 1–18 (MKIVFAILFLTFIALTYA). The propeptide occupies 19 to 57 (RSFEDLKEEIKNEIEKEIFDDLEEESDELDNNVKKFNDA). Ser80 is subject to Serine amide.

This sequence belongs to the arminin family. As to expression, expressed in entodermal epithelium along the body column.

It localises to the secreted. The protein resides in the target cell membrane. Antimicrobial peptide with a broad-spectrum antimicrobial activity. Keeps its antibacterial activity under a wide range of salt concentrations that mimic physiological conditions of human blood, which is surprising, since Hydra is an obligate freshwater animal with nearly no salt tolerance. Does not affect red blood cells. This Hydra vulgaris (Hydra) protein is Arminin 3b.